Reading from the N-terminus, the 505-residue chain is Xylose import ATP-binding protein XylG (505 aa).

2 ABC transporter domains span residues 6 to 243 (LEMR…VGRE) and 262 to 505 (VKNY…TGGK). 38-45 (GENGAGKS) is an ATP binding site.

The protein belongs to the ABC transporter superfamily. Xylose importer (TC 3.A.1.2.4) family. The complex is composed of two ATP-binding proteins (XylG), two transmembrane proteins (XylH) and a solute-binding protein (XylF).

The protein localises to the cell membrane. The enzyme catalyses D-xylose(out) + ATP + H2O = D-xylose(in) + ADP + phosphate + H(+). Functionally, part of the ABC transporter complex XylFGH involved in xylose import. Responsible for energy coupling to the transport system. This chain is Xylose import ATP-binding protein XylG, found in Thermoanaerobacter pseudethanolicus (strain ATCC 33223 / 39E) (Clostridium thermohydrosulfuricum).